A 239-amino-acid chain; its full sequence is Norbelladine 4'-O-methyltransferase (239 aa).

Residues Val-55, Glu-77, 79–80 (GV), Ser-85, Asp-103, and Ala-132 contribute to the S-adenosyl-L-methionine site. Asp-155 serves as a coordination point for a divalent metal cation. Asp-157 contributes to the S-adenosyl-L-methionine binding site. 2 residues coordinate a divalent metal cation: Asp-181 and Asn-182.

It belongs to the class I-like SAM-binding methyltransferase superfamily. Cation-dependent O-methyltransferase family. Mg(2+) is required as a cofactor. Mostly expressed in bulbs, and, to a lower extent, in stems and roots.

It carries out the reaction norbelladine + S-adenosyl-L-methionine = 4'-O-methylnorbelladine + S-adenosyl-L-homocysteine + H(+). It functions in the pathway alkaloid biosynthesis. Its function is as follows. 4'-O-methyltransferase converting norbelladine to 4'-O-methylnorbelladine. 4'-O-methylnorbelladine is a precursor to all Amaryllidaceae alkaloids such as galanthamine, lycorine and haemanthamine, and including haemanthamine- and crinamine-type alkaloids, promising anticancer agents. The protein is Norbelladine 4'-O-methyltransferase of Narcissus pseudonarcissus (Daffodil).